We begin with the raw amino-acid sequence, 383 residues long: Acetylornithine deacetylase (383 aa).

His-80 lines the Zn(2+) pocket. Residue Asp-82 is part of the active site. Asp-112 contacts Zn(2+). The active site involves Glu-144. 3 residues coordinate Zn(2+): Glu-145, Glu-169, and His-355.

It belongs to the peptidase M20A family. ArgE subfamily. As to quaternary structure, homodimer. Zn(2+) serves as cofactor. Co(2+) is required as a cofactor. Requires glutathione as cofactor.

It is found in the cytoplasm. The enzyme catalyses N(2)-acetyl-L-ornithine + H2O = L-ornithine + acetate. The protein operates within amino-acid biosynthesis; L-arginine biosynthesis; L-ornithine from N(2)-acetyl-L-ornithine (linear): step 1/1. Functionally, catalyzes the hydrolysis of the amide bond of N(2)-acetylated L-amino acids. Cleaves the acetyl group from N-acetyl-L-ornithine to form L-ornithine, an intermediate in L-arginine biosynthesis pathway, and a branchpoint in the synthesis of polyamines. The chain is Acetylornithine deacetylase from Shigella flexneri.